We begin with the raw amino-acid sequence, 94 residues long: Small ribosomal subunit protein bS16c (94 aa).

It belongs to the bacterial ribosomal protein bS16 family.

The protein localises to the plastid. It is found in the chloroplast. In Phalaenopsis aphrodite subsp. formosana (Moth orchid), this protein is Small ribosomal subunit protein bS16c.